Reading from the N-terminus, the 381-residue chain is Cobalt-precorrin-5B C(1)-methyltransferase (381 aa).

This sequence belongs to the CbiD family.

The catalysed reaction is Co-precorrin-5B + S-adenosyl-L-methionine = Co-precorrin-6A + S-adenosyl-L-homocysteine. Its pathway is cofactor biosynthesis; adenosylcobalamin biosynthesis; cob(II)yrinate a,c-diamide from sirohydrochlorin (anaerobic route): step 6/10. Functionally, catalyzes the methylation of C-1 in cobalt-precorrin-5B to form cobalt-precorrin-6A. The sequence is that of Cobalt-precorrin-5B C(1)-methyltransferase from Clostridium botulinum (strain Eklund 17B / Type B).